A 159-amino-acid chain; its full sequence is Photosystem II extrinsic protein U, chloroplastic (159 aa).

It belongs to the PsbU family. PSII is composed of 1 copy each of membrane proteins PsbA, PsbB, PsbC, PsbD, PsbE, PsbF, PsbH, PsbI, PsbJ, PsbK, PsbL, PsbM, PsbT, PsbX, PsbY, PsbZ, Psb30/Ycf12, at least 3 peripheral proteins of the oxygen-evolving complex and a large number of cofactors. It forms dimeric complexes. Part of the oxygen-evolving complex of photosystem II.

It localises to the plastid. It is found in the chloroplast thylakoid membrane. In terms of biological role, one of the extrinsic, lumenal subunits of photosystem II (PSII). PSII is a light-driven water plastoquinone oxidoreductase, using light energy to abstract electrons from H(2)O, generating a proton gradient subsequently used for ATP formation. The extrinsic proteins stabilize the structure of photosystem II oxygen-evolving complex (OEC), the ion environment of oxygen evolution and protect the OEC against heat-induced inactivation. The protein is Photosystem II extrinsic protein U, chloroplastic of Karenia brevis (Red tide dinoflagellate).